A 507-amino-acid polypeptide reads, in one-letter code: 3-oxosteroid 1-dehydrogenase (507 aa).

9–38 (DLLVVGSGGGALTGAYTAAAQGLTTIVLEK) lines the FAD pocket. Residues 299–385 (GLVVDSPGSV…LPRPDYRPER (87 aa)) are disordered.

Belongs to the FAD-dependent oxidoreductase 2 family. 3-oxosteroid dehydrogenase subfamily. It depends on FAD as a cofactor.

It is found in the cell membrane. The catalysed reaction is a 3-oxosteroid + A = a 3-oxo-Delta(1)-steroid + AH2. It functions in the pathway lipid metabolism; steroid degradation. Its function is as follows. Catalyzes the elimination of the C-1 and C-2 hydrogen atoms of the A-ring from the polycyclic ring structure of 3-ketosteroids. In Rhodococcus opacus (Nocardia opaca), this protein is 3-oxosteroid 1-dehydrogenase.